Consider the following 466-residue polypeptide: Vimentin (466 aa).

Over residues 1–13 the composition is skewed to low complexity; that stretch reads MSTRSVSSSSYRR. Positions 1–32 are disordered; that stretch reads MSTRSVSSSSYRRMFGGPGTGSRPSSTRSYVT. Serine 2 carries the post-translational modification N-acetylserine. Residues 2 to 95 are head; it reads STRSVSSSSY…FSLADAINTE (94 aa). Phosphoserine occurs at positions 5, 7, 8, 9, and 10. Residue serine 7 is glycosylated (O-linked (GlcNAc) serine; alternate). Position 20 is a phosphothreonine (threonine 20). A compositionally biased stretch (low complexity) spans 21–32; it reads GSRPSSTRSYVT. Serine 25 and serine 26 each carry phosphoserine. Residue threonine 33 is glycosylated (O-linked (GlcNAc) threonine). 6 positions are modified to phosphoserine: serine 34, serine 39, serine 42, serine 47, serine 49, and serine 51. The O-linked (GlcNAc) serine; alternate glycan is linked to serine 34. Tyrosine 53 carries the post-translational modification Phosphotyrosine. A phosphoserine mark is found at serine 55 and serine 56. Tyrosine 61 carries the phosphotyrosine modification. A phosphoserine mark is found at serine 66, serine 72, serine 73, serine 83, and serine 87. The tract at residues 96–131 is coil 1A; the sequence is FKNTRTNEKVELQELNDRFANYIDKVRFLEQQNKIL. A coiled-coil region spans residues 96-131; sequence FKNTRTNEKVELQELNDRFANYIDKVRFLEQQNKIL. In terms of domain architecture, IF rod spans 103 to 411; it reads EKVELQELND…KLLEGEESRI (309 aa). Lysine 104 is covalently cross-linked (Glycyl lysine isopeptide (Lys-Gly) (interchain with G-Cter in SUMO2)). Tyrosine 117 bears the Phosphotyrosine mark. An N6-acetyllysine; alternate mark is found at lysine 120, lysine 129, and lysine 139. N6-succinyllysine; alternate occurs at positions 120 and 129. Glycyl lysine isopeptide (Lys-Gly) (interchain with G-Cter in SUMO2); alternate cross-links involve residues lysine 120, lysine 129, and lysine 139. The segment at 132–153 is linker 1; the sequence is LAELEQLKGQGKSRLGDLYEEE. Serine 144 is subject to Phosphoserine. Residues 154-245 adopt a coiled-coil conformation; that stretch reads MRELRRQVDQ…KLHDEEIQEL (92 aa). The interval 154–245 is coil 1B; the sequence is MRELRRQVDQ…KLHDEEIQEL (92 aa). Residue lysine 168 is modified to N6-acetyllysine. Position 188 is an N6-acetyllysine; alternate (lysine 188). The residue at position 188 (lysine 188) is an N6-succinyllysine; alternate. Position 214 is a phosphoserine (serine 214). Position 223 is an N6-acetyllysine; alternate (lysine 223). Lysine 223 participates in a covalent cross-link: Glycyl lysine isopeptide (Lys-Gly) (interchain with G-Cter in SUMO2); alternate. Serine 226 is modified (phosphoserine). Lysine 235 bears the N6-acetyllysine mark. Positions 246–268 are linker 12; it reads QAQIQDQHVQIDMDVSKPDLTAA. Lysine 262 participates in a covalent cross-link: Glycyl lysine isopeptide (Lys-Gly) (interchain with G-Cter in SUMO2). Residues 269–407 form a coil 2 region; the sequence is LRDVRQQYES…ATYRKLLEGE (139 aa). Position 294 is an N6-acetyllysine; alternate (lysine 294). Lysine 294 bears the N6-succinyllysine; alternate mark. Residue lysine 294 forms a Glycyl lysine isopeptide (Lys-Gly) (interchain with G-Cter in SUMO2); alternate linkage. Serine 299 carries the phosphoserine modification. The stretch at 303-407 forms a coiled coil; it reads NRNNDALRQA…ATYRKLLEGE (105 aa). Lysine 313 is covalently cross-linked (Glycyl lysine isopeptide (Lys-Gly) (interchain with G-Cter in SUMO2)). Serine 325 carries the post-translational modification Phosphoserine. The short motif at 326–329 is the [IL]-x-C-x-x-[DE] motif element; the sequence is LTCE. The residue at position 373 (lysine 373) is an N6-acetyllysine; alternate. Lysine 373 is covalently cross-linked (Glycyl lysine isopeptide (Lys-Gly) (interchain with G-Cter in SUMO2); alternate). Residues 408–466 are tail; it reads ESRIALPLPNFSSLNLRETNLDSLPLVDTHSKRTLLIKTVETRDGQVINETSQHHDDLE. Phosphoserine is present on residues serine 409, serine 419, and serine 420. The residue at position 426 (threonine 426) is a Phosphothreonine. Serine 430 carries the phosphoserine modification. Position 436 is a phosphothreonine (threonine 436). A Phosphoserine modification is found at serine 438. Residue lysine 439 forms a Glycyl lysine isopeptide (Lys-Gly) (interchain with G-Cter in SUMO2) linkage. N6-acetyllysine; alternate is present on lysine 445. Lysine 445 bears the N6-succinyllysine; alternate mark. Lysine 445 participates in a covalent cross-link: Glycyl lysine isopeptide (Lys-Gly) (interchain with G-Cter in SUMO2); alternate. Lysine 445 participates in a covalent cross-link: Glycyl lysine isopeptide (Lys-Gly) (interchain with G-Cter in SUMO1); alternate. 2 positions are modified to phosphothreonine: threonine 446 and threonine 458. Residue serine 459 is modified to Phosphoserine.

Belongs to the intermediate filament family. In terms of assembly, homomer assembled from elementary dimers. Identified in complexes that contain VIM, EZR, AHNAK, BFSP1, BFSP2, ANK2, PLEC, PRX and spectrin. Interacts with BCAS3. Interacts with LGSN. Interacts with SYNM. Interacts (via rod region) with PLEC (via CH 1 domain). Interacts with STK33. Interacts with LARP6. Interacts with RAB8B. Interacts with TOR1A; the interaction associates TOR1A with the cytoskeleton. Interacts with TOR1AIP1. Interacts with TOR1AIP1. Interacts with DIAPH1. Interacts with EPPK1; interaction is dependent of higher-order structure of intermediate filament. Interacts with the non-receptor tyrosine kinase SRMS; the interaction leads to phosphorylation of VIM. Interacts with NOD2. Interacts (via head region) with CORO1C. Interacts with HDGF. Interacts with PRKCE (via phorbol-ester/DAG-type 2 domain). Interacts with BFSP2. Interacts with PPL. Interacts with PKP1 and PKP2. Interacts with SCRIB (via PDZ domains); the interaction protects SCRIB from proteasomal degradation and facilitates SCRIB localization to intermediate filaments, the interaction is reduced by cell contact inhibition. Filament disassembly during mitosis is promoted by phosphorylation at Ser-55 as well as by nestin. One of the most prominent phosphoproteins in various cells of mesenchymal origin. Phosphorylation is enhanced during cell division, at which time vimentin filaments are significantly reorganized. Phosphorylation by PKN1 inhibits the formation of filaments. Phosphorylated at Ser-56 by CDK5 during neutrophil secretion in the cytoplasm. Phosphorylated by STK33. Phosphorylated on tyrosine residues by SRMS. Post-translationally, O-glycosylated during cytokinesis at sites identical or close to phosphorylation sites, this interferes with the phosphorylation status. In terms of processing, S-nitrosylation is induced by interferon-gamma and oxidatively-modified low-densitity lipoprotein (LDL(ox)) possibly implicating the iNOS-S100A8/9 transnitrosylase complex.

The protein localises to the cytoplasm. Its subcellular location is the cytoskeleton. It localises to the nucleus matrix. It is found in the cell membrane. Functionally, vimentins are class-III intermediate filaments found in various non-epithelial cells, especially mesenchymal cells. Vimentin is attached to the nucleus, endoplasmic reticulum, and mitochondria, either laterally or terminally. Plays a role in cell directional movement, orientation, cell sheet organization and Golgi complex polarization at the cell migration front. Protects SCRIB from proteasomal degradation and facilitates its localization to intermediate filaments in a cell contact-mediated manner. Its function is as follows. Involved with LARP6 in the stabilization of type I collagen mRNAs for CO1A1 and CO1A2. The sequence is that of Vimentin (VIM) from Canis lupus familiaris (Dog).